The chain runs to 399 residues: PCI domain-containing protein 2 (399 aa).

The 182-residue stretch at 210-391 (VTYKYYVGRK…QKLVVSKQNP (182 aa)) folds into the PCI domain.

Belongs to the CSN12 family.

The sequence is that of PCI domain-containing protein 2 (pcid2) from Danio rerio (Zebrafish).